A 120-amino-acid polypeptide reads, in one-letter code: MVRVISSQPRKQRKARYNAPHHMRGSLLHAALSKELQGKYKRRSIRVIKGDTVKVLRGDHAGTEGLVDYVITRDARIVVDGVSVKKADGTEVPRPVDPSNVMITDLNLEDKRREQKLSGE.

The segment at 1 to 26 is disordered; it reads MVRVISSQPRKQRKARYNAPHHMRGS. The segment covering 10 to 24 has biased composition (basic residues); sequence RKQRKARYNAPHHMR.

The protein belongs to the universal ribosomal protein uL24 family. In terms of assembly, part of the 50S ribosomal subunit.

One of two assembly initiator proteins, it binds directly to the 5'-end of the 23S rRNA, where it nucleates assembly of the 50S subunit. Its function is as follows. Located at the polypeptide exit tunnel on the outside of the subunit. The polypeptide is Large ribosomal subunit protein uL24 (Methanospirillum hungatei JF-1 (strain ATCC 27890 / DSM 864 / NBRC 100397 / JF-1)).